A 307-amino-acid chain; its full sequence is Malate dehydrogenase (307 aa).

NAD(+) is bound by residues 8 to 13 (GAGNVG) and Asp-32. Residues Arg-81 and Arg-87 each contribute to the substrate site. Residues Asn-94 and 117 to 119 (VSN) each bind NAD(+). Asn-119 and Arg-150 together coordinate substrate. Residue His-174 is the Proton acceptor of the active site.

It belongs to the LDH/MDH superfamily. MDH type 3 family.

The catalysed reaction is (S)-malate + NAD(+) = oxaloacetate + NADH + H(+). Catalyzes the reversible oxidation of malate to oxaloacetate. This is Malate dehydrogenase from Dehalococcoides mccartyi (strain ATCC BAA-2266 / KCTC 15142 / 195) (Dehalococcoides ethenogenes (strain 195)).